Consider the following 206-residue polypeptide: Small ribosomal subunit protein uS4 (206 aa).

The segment at 18–46 (NIWGRPKSPVNRREYGPGQHGQRRKQKMS) is disordered. The region spanning 94-154 (RRLDAVVYRA…EKSRQMAALL (61 aa)) is the S4 RNA-binding domain.

Belongs to the universal ribosomal protein uS4 family. Part of the 30S ribosomal subunit. Contacts protein S5. The interaction surface between S4 and S5 is involved in control of translational fidelity.

In terms of biological role, one of the primary rRNA binding proteins, it binds directly to 16S rRNA where it nucleates assembly of the body of the 30S subunit. With S5 and S12 plays an important role in translational accuracy. This is Small ribosomal subunit protein uS4 from Dinoroseobacter shibae (strain DSM 16493 / NCIMB 14021 / DFL 12).